We begin with the raw amino-acid sequence, 341 residues long: Hyaluronan and proteoglycan link protein 2 (341 aa).

The first 27 residues, M1–G27, serve as a signal peptide directing secretion. The 109-residue stretch at P35–T143 folds into the Ig-like V-type domain. Intrachain disulfides connect C58–C129, C171–C241, C195–C216, C266–C337, and C291–C312. 2 consecutive Link domains span residues V149–T243 and L246–A339.

Belongs to the HAPLN family. As to expression, brain.

The protein resides in the secreted. It is found in the extracellular space. Its subcellular location is the extracellular matrix. Mediates a firm binding of versican V2 to hyaluronic acid. May play a pivotal role in the formation of the hyaluronan-associated matrix in the central nervous system (CNS) which facilitates neuronal conduction and general structural stabilization. Binds to hyaluronic acid. This Rattus norvegicus (Rat) protein is Hyaluronan and proteoglycan link protein 2 (Hapln2).